Reading from the N-terminus, the 162-residue chain is Precursor protein UG (162 aa).

The signal sequence occupies residues 1–19 (MERILLCFIVATLVAISMA). Residues 20-23 (NPRP) constitute a propeptide that is removed on maturation. 2 disulfide bridges follow: Cys30/Cys42 and Cys33/Cys49. Positions 56–59 (VPKP) are excised as a propeptide. 2 cysteine pairs are disulfide-bonded: Cys66/Cys78 and Cys69/Cys85. The propeptide occupies 92–95 (VPKP). 2 disulfides stabilise this stretch: Cys102/Cys114 and Cys105/Cys121. A propeptide spanning residues 128 to 131 (VPKP) is cleaved from the precursor. 2 cysteine pairs are disulfide-bonded: Cys138-Cys150 and Cys141-Cys157.

This sequence belongs to the sea anemone BBH family.

It is found in the secreted. The protein localises to the nematocyst. Its function is as follows. Affects the ASIC3 channel (ACCN3) and produces analgesic effects. It produces a reversible inhibition effect on both the transient and the sustained current of human ASIC3 channels expressed in X.laevis oocytes. It completely blocks the transient component (IC(50)=10 uM) and partially (48%) inhibits the amplitude of the sustained component (IC(50)=1.44 uM). Using in vivo tests in mice, it reverses inflammatory and acid-induced pain. In terms of biological role, does not affect the ASIC3 channel. Does not cause lethality or paralysis of noble crayfish (A.astacus) at a dose of 1 mg/kg. The protein is Precursor protein UG of Urticina grebelnyi (Painted anemone).